The chain runs to 384 residues: Transcription factor TGA3 (384 aa).

2 disordered regions span residues 36-70 (KSDINNITSNQNNNQSSSTTLEVDARPEADDNNRV) and 76-95 (YNNSLEAEPSSNNDQDEDRI). Residues 39 to 55 (INNITSNQNNNQSSSTT) show a composition bias toward low complexity. A compositionally biased stretch (basic and acidic residues) spans 58–68 (VDARPEADDNN). The span at 76-88 (YNNSLEAEPSSNN) shows a compositional bias: polar residues. The bZIP domain occupies 96–138 (NDKMKRRLAQNREAARKSRLRKKAHVQQLEESRLKLSQLEQEL). The basic motif stretch occupies residues 98–118 (KMKRRLAQNREAARKSRLRKK). The short motif at 99–106 (MKRRLAQN) is the Nuclear localization signal element. Residues 117–144 (KKAHVQQLEESRLKLSQLEQELVRARQQ) are a coiled coil. Positions 124–138 (LEESRLKLSQLEQEL) are leucine-zipper. A DOG1 domain is found at 167–379 (IAAFEMEYTH…RALSSLWAAR (213 aa)). Residues lysine 219, arginine 236, and phenylalanine 249 each contribute to the hexadecanoate site. A coiled-coil region spans residues 267 to 296 (DQQLLEVRNLQQSSQQAEEALSQGLDKLQQ).

This sequence belongs to the bZIP family. In terms of assembly, binds DNA as a dimer. Interacts with NPR3, NPR4 and sumoylated NPR1. Interacts with GRXC7/ROXY1. As to expression, expressed in the whole plant.

The protein localises to the nucleus. In terms of biological role, transcriptional activator that binds specifically to the DNA sequence 5'-TGACG-3'. Recognizes ocs elements like the as-1 motif of the cauliflower mosaic virus 35S promoter. Binding to the as-1-like cis elements mediate auxin- and salicylic acid-inducible transcription. Required to induce the systemic acquired resistance (SAR) via the regulation of pathogenesis-related genes expression. Binding to the as-1 element of PR-1 promoter is salicylic acid-inducible and mediated by sumoylated NPR1. Could also bind to the Hex-motif (5'-TGACGTGG-3') another cis-acting element found in plant histone promoters. The chain is Transcription factor TGA3 from Arabidopsis thaliana (Mouse-ear cress).